We begin with the raw amino-acid sequence, 172 residues long: Translocator protein 2 (172 aa).

The next 5 membrane-spanning stretches (helical) occupy residues 3–23 (PQGAIFVALPHLGPILVSLLT), 45–65 (VLLAGWITIYFVMGYASYLVW), 80–100 (LGLYAVQLAVSWAVLIFFFAA), 104–124 (GLALLHMLLLYGLVVSTALIW), and 130–150 (LAAVLLLPYLAWLTVTASIAY).

It belongs to the TspO/BZRP family. As to quaternary structure, homotetramer. May also form homodimer. As to expression, expressed in erythrocytes (at protein level).

It localises to the endoplasmic reticulum membrane. The protein localises to the cell membrane. In terms of biological role, cholesterol-binding protein involved in the redistribution of cholesterol from lipid droplets to the endoplasmic reticulum. Required to meet cholesterol demands during erythropoietic differentiation. May play a role in transport processes at the plasma membrane of erythrocytes, including regulating VDAC-mediated ATP export, and import of the heme precursors protoporphyrin IX and 5-aminolevulinic acid. In Canis lupus familiaris (Dog), this protein is Translocator protein 2.